The following is a 183-amino-acid chain: Peptidyl-tRNA hydrolase (183 aa).

Y14 lines the tRNA pocket. H19 (proton acceptor) is an active-site residue. 2 residues coordinate tRNA: Y55 and N57.

The protein belongs to the PTH family. Monomer.

The protein localises to the cytoplasm. The catalysed reaction is an N-acyl-L-alpha-aminoacyl-tRNA + H2O = an N-acyl-L-amino acid + a tRNA + H(+). Its function is as follows. Hydrolyzes ribosome-free peptidyl-tRNAs (with 1 or more amino acids incorporated), which drop off the ribosome during protein synthesis, or as a result of ribosome stalling. Catalyzes the release of premature peptidyl moieties from peptidyl-tRNA molecules trapped in stalled 50S ribosomal subunits, and thus maintains levels of free tRNAs and 50S ribosomes. The chain is Peptidyl-tRNA hydrolase from Thermus thermophilus (strain ATCC BAA-163 / DSM 7039 / HB27).